Consider the following 307-residue polypeptide: Ornithine carbamoyltransferase (307 aa).

Residues Ser-54–Thr-57, Gln-81, Arg-105, and His-132–Gln-135 contribute to the carbamoyl phosphate site. Residues Asn-163, Asp-221, and Ser-225–Met-226 contribute to the L-ornithine site. Carbamoyl phosphate is bound by residues Cys-261 to Leu-262 and Arg-289.

Belongs to the aspartate/ornithine carbamoyltransferase superfamily. OTCase family.

It localises to the cytoplasm. It carries out the reaction carbamoyl phosphate + L-ornithine = L-citrulline + phosphate + H(+). It participates in amino-acid biosynthesis; L-arginine biosynthesis; L-arginine from L-ornithine and carbamoyl phosphate: step 1/3. Functionally, reversibly catalyzes the transfer of the carbamoyl group from carbamoyl phosphate (CP) to the N(epsilon) atom of ornithine (ORN) to produce L-citrulline. In Chromobacterium violaceum (strain ATCC 12472 / DSM 30191 / JCM 1249 / CCUG 213 / NBRC 12614 / NCIMB 9131 / NCTC 9757 / MK), this protein is Ornithine carbamoyltransferase.